Here is a 386-residue protein sequence, read N- to C-terminus: Convicilin (386 aa).

The first 29 residues, 1 to 29 (MATTIKSRFPLLLLLGIIFLASVVSVTYA), serve as a signal peptide directing secretion. The disordered stretch occupies residues 33–199 (EGSEPRVPAQ…EERSSESQER (167 aa)). Basic and acidic residues-rich tracts occupy residues 41-65 (AQRERGRQEGEKEEKRHGEWRPSYE), 74-91 (QRERGRQEGEKEEKRHGE), 104-144 (EKQK…RWER), and 153-186 (EEWRGSQRREDPEERARLRHREERTKRDRRHQRE). The Cupin type-1 domain maps to 202–359 (PFLFKSNKFL…SYNTRYETIE (158 aa)). A disordered region spans residues 367–386 (EKDRKRRQQGEETDAIVKVS).

It belongs to the 7S seed storage protein family.

Its subcellular location is the vacuole. It localises to the aleurone grain. Functionally, seed storage protein. The polypeptide is Convicilin (CVCB) (Pisum sativum (Garden pea)).